An 88-amino-acid polypeptide reads, in one-letter code: Cell division topological specificity factor (88 aa).

This sequence belongs to the MinE family.

Its function is as follows. Prevents the cell division inhibition by proteins MinC and MinD at internal division sites while permitting inhibition at polar sites. This ensures cell division at the proper site by restricting the formation of a division septum at the midpoint of the long axis of the cell. The polypeptide is Cell division topological specificity factor (Escherichia fergusonii (strain ATCC 35469 / DSM 13698 / CCUG 18766 / IAM 14443 / JCM 21226 / LMG 7866 / NBRC 102419 / NCTC 12128 / CDC 0568-73)).